A 348-amino-acid polypeptide reads, in one-letter code: Phosphate acyltransferase (348 aa).

The protein belongs to the PlsX family. Homodimer. Probably interacts with PlsY.

The protein resides in the cytoplasm. The catalysed reaction is a fatty acyl-[ACP] + phosphate = an acyl phosphate + holo-[ACP]. The protein operates within lipid metabolism; phospholipid metabolism. Functionally, catalyzes the reversible formation of acyl-phosphate (acyl-PO(4)) from acyl-[acyl-carrier-protein] (acyl-ACP). This enzyme utilizes acyl-ACP as fatty acyl donor, but not acyl-CoA. The chain is Phosphate acyltransferase from Francisella tularensis subsp. tularensis (strain FSC 198).